The following is a 289-amino-acid chain: Phosphoribulokinase (289 aa).

12–20 (GSSGAGTTT) contributes to the ATP binding site.

Belongs to the phosphoribulokinase family.

It carries out the reaction D-ribulose 5-phosphate + ATP = D-ribulose 1,5-bisphosphate + ADP + H(+). The protein operates within carbohydrate biosynthesis; Calvin cycle. In Sinorhizobium medicae (strain WSM419) (Ensifer medicae), this protein is Phosphoribulokinase (cbbP).